We begin with the raw amino-acid sequence, 465 residues long: 23S rRNA (uracil(1939)-C(5))-methyltransferase RlmD (465 aa).

Residues 1-22 are disordered; that stretch reads MSEAVPTSARKSKNAPVAPGPA. The 65-residue stretch at 16-80 folds into the TRAM domain; that stretch reads PVAPGPAPVL…PSYEQATVVD (65 aa). [4Fe-4S] cluster contacts are provided by Cys93, Cys99, Cys102, and Cys181. Residues Gln289, Phe318, Asn323, Glu339, Asn367, and Asp388 each coordinate S-adenosyl-L-methionine. Cys421 serves as the catalytic Nucleophile.

The protein belongs to the class I-like SAM-binding methyltransferase superfamily. RNA M5U methyltransferase family. RlmD subfamily.

It carries out the reaction uridine(1939) in 23S rRNA + S-adenosyl-L-methionine = 5-methyluridine(1939) in 23S rRNA + S-adenosyl-L-homocysteine + H(+). Catalyzes the formation of 5-methyl-uridine at position 1939 (m5U1939) in 23S rRNA. The polypeptide is 23S rRNA (uracil(1939)-C(5))-methyltransferase RlmD (Burkholderia cenocepacia (strain HI2424)).